Reading from the N-terminus, the 308-residue chain is Aspartate carbamoyltransferase catalytic subunit (308 aa).

Positions 49 and 50 each coordinate carbamoyl phosphate. Residue Lys77 coordinates L-aspartate. Carbamoyl phosphate contacts are provided by Arg99, His127, and Gln130. 2 residues coordinate L-aspartate: Arg160 and Arg211. Carbamoyl phosphate contacts are provided by Ala252 and Pro253.

This sequence belongs to the aspartate/ornithine carbamoyltransferase superfamily. ATCase family. Heterododecamer (2C3:3R2) of six catalytic PyrB chains organized as two trimers (C3), and six regulatory PyrI chains organized as three dimers (R2).

It carries out the reaction carbamoyl phosphate + L-aspartate = N-carbamoyl-L-aspartate + phosphate + H(+). It functions in the pathway pyrimidine metabolism; UMP biosynthesis via de novo pathway; (S)-dihydroorotate from bicarbonate: step 2/3. Catalyzes the condensation of carbamoyl phosphate and aspartate to form carbamoyl aspartate and inorganic phosphate, the committed step in the de novo pyrimidine nucleotide biosynthesis pathway. The sequence is that of Aspartate carbamoyltransferase catalytic subunit from Geobacillus thermodenitrificans (strain NG80-2).